A 138-amino-acid chain; its full sequence is Acidic phospholipase A2 2 (138 aa).

A signal peptide spans 1-16 (MRTLWIVAVWLTGVEG). Cystine bridges form between Cys42/Cys131, Cys44/Cys60, Cys59/Cys111, Cys65/Cys138, Cys66/Cys104, Cys73/Cys97, and Cys91/Cys102. Residues Tyr43, Gly45, and Gly47 each coordinate Ca(2+). Residue His63 is part of the active site. Asp64 contacts Ca(2+). Residue Asp105 is part of the active site.

As to quaternary structure, monomer. The cofactor is Ca(2+). As to expression, expressed by the venom gland.

The protein localises to the secreted. The enzyme catalyses a 1,2-diacyl-sn-glycero-3-phosphocholine + H2O = a 1-acyl-sn-glycero-3-phosphocholine + a fatty acid + H(+). Its function is as follows. Snake venom phospholipase that inhibits ADP- and collagen-induced human platelet aggregation. This inhibition is completely inhibited by abolition of catalytic activity in case of collagen as inducer and partially inhibited in case of ADP as inducer. PLA2 catalyzes the calcium-dependent hydrolysis of the 2-acyl groups in 3-sn-phosphoglycerides. The protein is Acidic phospholipase A2 2 of Macrovipera lebetinus (Levantine viper).